We begin with the raw amino-acid sequence, 1102 residues long: Probable ubiquitin-conjugating enzyme E2 23 (1102 aa).

6 disordered regions span residues 1–20 (MEHEQDDPGTSTNVGVDSSV), 25–111 (ASLS…DGNY), 396–418 (LPKVTSDDPPQRNPSVSKEPVHE), 579–602 (SPGNSFEEATQQDNGYQDSESHQE), 661–710 (DESV…DIYA), and 760–800 (QAES…KNIL). Residues 31-44 (DSEHPNIYRQDIVK) show a composition bias toward basic and acidic residues. Acidic residues predominate over residues 59-88 (GDSDSDSDISDEEEDDDDDEDNDDDDEDVE). Over residues 579–596 (SPGNSFEEATQQDNGYQD) the composition is skewed to polar residues. The segment covering 779–800 (SKVNVTDNCESKGTQANAKNIL) has biased composition (polar residues). Positions 850–1010 (QWFKKVDQDW…TFLLNCKTMM (161 aa)) constitute a UBC core domain. Cys-936 functions as the Glycyl thioester intermediate in the catalytic mechanism.

The protein belongs to the ubiquitin-conjugating enzyme family.

The catalysed reaction is S-ubiquitinyl-[E1 ubiquitin-activating enzyme]-L-cysteine + [E2 ubiquitin-conjugating enzyme]-L-cysteine = [E1 ubiquitin-activating enzyme]-L-cysteine + S-ubiquitinyl-[E2 ubiquitin-conjugating enzyme]-L-cysteine.. Its pathway is protein modification; protein ubiquitination. Functionally, accepts the ubiquitin from the E1 complex and catalyzes its covalent attachment to other proteins. This Arabidopsis thaliana (Mouse-ear cress) protein is Probable ubiquitin-conjugating enzyme E2 23 (UBC23).